The chain runs to 51 residues: Conotoxin Cal6.33 (51 aa).

Positions 1 to 22 are cleaved as a signal peptide; the sequence is MKLTCVVIIAVLILTACQFTTA. Intrachain disulfides connect Cys-25-Cys-39, Cys-32-Cys-43, and Cys-38-Cys-50.

The protein belongs to the conotoxin O1 superfamily. Expressed by the venom duct.

The protein localises to the secreted. Probable neurotoxin. The protein is Conotoxin Cal6.33 of Californiconus californicus (California cone).